The following is a 509-amino-acid chain: MPQLENNEPLLINEEEEEETAYDETEKVHIVRNEEEDDLEHGVGCGGAPPFSWKKLWLFTGPGFLMSIAFLDPGNLEGDLQAGAVAGYSLLWLLMWATAMGLLVQLLSARLGVATGRHLAELCRDEYPTWARMVLWVMAELALIGSDIQEVIGSAIAIKILSNGILPLWAGVVITALDCFVFLFLENYGIRKLEAVFAVLIATMGVSFAWMFGQAKPSGSELLIGILVPKLSSRTIQKAVGVVGCIIMPHNVFLHSALVQSREVDKRQKYRVQEALNYYTIESTIALFISFLINLFVTTVFAKGFYNTDLANSIGLVNAGQYLQEKYGGGVFPILYIWAIGLLAAGQSSTITGTYAGQFIMGGFLNFKMKKWLRALITRSCAIIPTIIVALVFDSSEATLDVLNEWLNVLQSIQIPFALIPLLCLVSKEQIMGSFKIGPLYKTIAWLVAALVIMINGYLLLEFFSNEVSGIVYTGFVTLFTASYGAFILYLIARGITFTPWPFKAESSH.

Residues 1 to 12 are compositionally biased toward low complexity; the sequence is MPQLENNEPLLI. The interval 1 to 25 is disordered; sequence MPQLENNEPLLINEEEEEETAYDET. Acidic residues predominate over residues 13–23; it reads NEEEEEETAYD. Helical transmembrane passes span 56–76, 84–104, 133–153, 165–185, 193–213, 239–259, 285–305, 327–347, 383–403, 406–426, 444–464, and 472–492; these read LWLF…PGNL, AVAG…GLLV, MVLW…EVIG, ILPL…FLFL, LEAV…WMFG, AVGV…SALV, IALF…AKGF, YGGG…AAGQ, IIPT…LDVL, WLNV…LCLV, IAWL…LEFF, and VYTG…LYLI.

Belongs to the NRAMP (TC 2.A.55) family. Expressed in vascular tissues.

Its subcellular location is the vacuole membrane. In terms of biological role, vacuolar metal transporter involved in intracellular metal homeostasis. Can transport iron (Fe), manganese (Mn) and cadmium (Cd). Regulates metal accumulation under Fe starvation. Acts redundantly with NRAMP4 to mobilize vacuolar Fe and provide sufficient Fe during seed germination. In association with NRAMP4, required for optimal growth and photosynthesis under Mn deficiency. Exports Mn from vacuoles in leaf mesophyll cells, making Mn available for functional photosystem II in chloroplasts. Involved in basal resistance to the bacterial pathogen E.chrysanthemi. The polypeptide is Metal transporter Nramp3 (NRAMP3) (Arabidopsis thaliana (Mouse-ear cress)).